Here is a 658-residue protein sequence, read N- to C-terminus: Threonine--tRNA ligase (658 aa).

The 64-residue stretch at 1 to 64 (MSNTVSLQFP…GASGKVEIIT (64 aa)) folds into the TGS domain. Positions 246-548 (DHRRLGREMD…LIENFAGHMP (303 aa)) are catalytic. Positions 343, 394, and 525 each coordinate Zn(2+).

Belongs to the class-II aminoacyl-tRNA synthetase family. As to quaternary structure, homodimer. Zn(2+) serves as cofactor.

The protein resides in the cytoplasm. It catalyses the reaction tRNA(Thr) + L-threonine + ATP = L-threonyl-tRNA(Thr) + AMP + diphosphate + H(+). Its function is as follows. Catalyzes the attachment of threonine to tRNA(Thr) in a two-step reaction: L-threonine is first activated by ATP to form Thr-AMP and then transferred to the acceptor end of tRNA(Thr). Also edits incorrectly charged L-seryl-tRNA(Thr). This chain is Threonine--tRNA ligase, found in Brucella melitensis biotype 2 (strain ATCC 23457).